Reading from the N-terminus, the 492-residue chain is uncharacterized protein (492 aa).

A signal peptide spans 1–22 (MIRPNMFALLMLVVLAITSVNA). N-linked (GlcNAc...) asparagine; by host glycosylation is found at Asn92, Asn97, Asn119, Asn146, Asn213, Asn267, and Asn458.

It localises to the secreted. This is an uncharacterized protein from Acanthamoeba polyphaga (Amoeba).